Reading from the N-terminus, the 336-residue chain is tRNA N6-adenosine threonylcarbamoyltransferase (336 aa).

The Fe cation site is built by histidine 114 and histidine 118. Substrate is bound by residues 136–140 (LVSGG), aspartate 169, glycine 182, aspartate 186, and asparagine 275. Fe cation is bound at residue aspartate 301.

This sequence belongs to the KAE1 / TsaD family. The cofactor is Fe(2+).

The protein resides in the cytoplasm. It catalyses the reaction L-threonylcarbamoyladenylate + adenosine(37) in tRNA = N(6)-L-threonylcarbamoyladenosine(37) in tRNA + AMP + H(+). Functionally, required for the formation of a threonylcarbamoyl group on adenosine at position 37 (t(6)A37) in tRNAs that read codons beginning with adenine. Is involved in the transfer of the threonylcarbamoyl moiety of threonylcarbamoyl-AMP (TC-AMP) to the N6 group of A37, together with TsaE and TsaB. TsaD likely plays a direct catalytic role in this reaction. This chain is tRNA N6-adenosine threonylcarbamoyltransferase, found in Streptococcus gordonii (strain Challis / ATCC 35105 / BCRC 15272 / CH1 / DL1 / V288).